Here is a 415-residue protein sequence, read N- to C-terminus: uncharacterized protein (415 aa).

Residues 1-55 (MSTGTVTIDRLGAQGDGVARTEAGPVFAPFTLPGETVSLAVNKANGTLISLKEAS) enclose the TRAM domain. Positions 63, 75, 78, and 152 each coordinate [4Fe-4S] cluster. Residues glutamine 252, phenylalanine 279, glutamate 299, and aspartate 347 each contribute to the S-adenosyl-L-methionine site. Residue cysteine 373 is the Nucleophile of the active site.

It belongs to the class I-like SAM-binding methyltransferase superfamily. RNA M5U methyltransferase family.

This is an uncharacterized protein from Rhizobium meliloti (strain 1021) (Ensifer meliloti).